The primary structure comprises 147 residues: Hemoglobin subunit epsilon (147 aa).

Residues 3-147 (HFTAEEKAAI…VAIALGHKYH (145 aa)) form the Globin domain. A phosphoserine mark is found at serine 14 and serine 51. Heme b-binding residues include histidine 64 and histidine 93.

It belongs to the globin family. Heterotetramer of two alpha chains and two epsilon chains in early embryonic hemoglobin Gower-2; two zeta chains and two epsilon chains in early embryonic hemoglobin Gower-1. In terms of tissue distribution, red blood cells.

Functionally, the epsilon chain is a beta-type chain of early mammalian embryonic hemoglobin. This chain is Hemoglobin subunit epsilon (HBE1), found in Leontopithecus rosalia (Golden lion tamarin).